The sequence spans 270 residues: Small ribosomal subunit protein bS1m (270 aa).

The tract at residues 218 to 250 is disordered; it reads TKQGFKHLGPKPLAYTEKKRETTKQSTKNNVFQ.

It belongs to the bacterial ribosomal protein bS1 family.

It localises to the mitochondrion. The polypeptide is Small ribosomal subunit protein bS1m (RPS1) (Marchantia polymorpha (Common liverwort)).